A 126-amino-acid chain; its full sequence is MSDSHHKPVWDRTHHAKMATGIGDPQCFKGMAGKSKFNVGDRVRIKDLPDLFYTRTMTYTRGATGTIVRLVYESPAAEDEAFGNEENVEWFYSIVFAQKDLWPEYSDTFANDTLETEIPERYLEKA.

In terms of assembly, heterododecamer consisting of 4 alpha, 4 beta, and 4 gamma subunits.

The catalysed reaction is thiocyanate + H2O + 2 H(+) = carbonyl sulfide + NH4(+). Its pathway is organosulfur degradation; thiocyanate degradation. Involved in the degradation of thiocyanate. This chain is Thiocyanate hydrolase subunit alpha (scnA), found in Thiobacillus thioparus.